Consider the following 81-residue polypeptide: Protein translocase subunit SecE (81 aa).

Residues 50–70 (VAVILMVILVSTVIYFVDQIF) traverse the membrane as a helical segment.

Belongs to the SecE/SEC61-gamma family. As to quaternary structure, component of the Sec protein translocase complex. Heterotrimer consisting of SecY, SecE and SecG subunits. The heterotrimers can form oligomers, although 1 heterotrimer is thought to be able to translocate proteins. Interacts with the ribosome. Interacts with SecDF, and other proteins may be involved. Interacts with SecA.

Its subcellular location is the cell inner membrane. The protein localises to the cellular thylakoid membrane. Functionally, essential subunit of the Sec protein translocation channel SecYEG. Clamps together the 2 halves of SecY. May contact the channel plug during translocation. The chain is Protein translocase subunit SecE from Synechocystis sp. (strain ATCC 27184 / PCC 6803 / Kazusa).